The primary structure comprises 487 residues: Probable glutamate receptor (487 aa).

The signal sequence occupies residues 1–23 (MDKGLHFIFCVVTAVLLLRESSQ). At 24 to 169 (TGAMRNDDAM…FFHFLAPFSK (146 aa)) the chain is on the extracellular side. Asn-104 carries an N-linked (GlcNAc...) asparagine glycan. The chain crosses the membrane as a helical span at residues 170 to 190 (ETWTGLLFAYVLTCVCLFLVA). Residues 191 to 235 (RLSPCEWNEPKNEENHFTFLNSLWFGAGALTLQGVTPRPKAFSVR) lie on the Cytoplasmic side of the membrane. Residues 236–256 (VIAAIWWLFTIALLAAYIANF) form a helical membrane-spanning segment. Over 257-419 (TALLSSGSEQ…EGWSPLQPQA (163 aa)) the chain is Extracellular. The chain crosses the membrane as a helical span at residues 420 to 440 (LGGLFLTLAIGLALGVIAAMV). Over 441–487 (ELSNKSRHAAGHIKKSCCSIFTEEMCTRLRIKENTRQTQETSGRANA) the chain is Cytoplasmic.

The protein belongs to the glutamate-gated ion channel (TC 1.A.10.1) family.

Its subcellular location is the cell membrane. The protein resides in the postsynaptic cell membrane. Receptor for glutamate. L-glutamate acts as an excitatory neurotransmitter at many synapses in the central nervous system. The postsynaptic actions of Glu are mediated by a variety of receptors that are named according to their selective agonists. The polypeptide is Probable glutamate receptor (KBP) (Gallus gallus (Chicken)).